A 345-amino-acid chain; its full sequence is tRNA N6-adenosine threonylcarbamoyltransferase (345 aa).

Residues histidine 111 and histidine 115 each coordinate Fe cation. Substrate is bound by residues 136–140 (LVSGG), aspartate 169, glycine 182, and asparagine 279. Aspartate 307 contributes to the Fe cation binding site.

This sequence belongs to the KAE1 / TsaD family. The cofactor is Fe(2+).

Its subcellular location is the cytoplasm. It carries out the reaction L-threonylcarbamoyladenylate + adenosine(37) in tRNA = N(6)-L-threonylcarbamoyladenosine(37) in tRNA + AMP + H(+). Required for the formation of a threonylcarbamoyl group on adenosine at position 37 (t(6)A37) in tRNAs that read codons beginning with adenine. Is involved in the transfer of the threonylcarbamoyl moiety of threonylcarbamoyl-AMP (TC-AMP) to the N6 group of A37, together with TsaE and TsaB. TsaD likely plays a direct catalytic role in this reaction. This chain is tRNA N6-adenosine threonylcarbamoyltransferase, found in Actinobacillus succinogenes (strain ATCC 55618 / DSM 22257 / CCUG 43843 / 130Z).